A 196-amino-acid polypeptide reads, in one-letter code: Molybdenum cofactor guanylyltransferase (196 aa).

GTP contacts are provided by residues 10–12 (LAG), Lys23, Asn51, Asp69, and Asp99. Asp99 contributes to the Mg(2+) binding site.

This sequence belongs to the MobA family. As to quaternary structure, monomer. It depends on Mg(2+) as a cofactor.

Its subcellular location is the cytoplasm. The enzyme catalyses Mo-molybdopterin + GTP + H(+) = Mo-molybdopterin guanine dinucleotide + diphosphate. In terms of biological role, transfers a GMP moiety from GTP to Mo-molybdopterin (Mo-MPT) cofactor (Moco or molybdenum cofactor) to form Mo-molybdopterin guanine dinucleotide (Mo-MGD) cofactor. The chain is Molybdenum cofactor guanylyltransferase from Shewanella sediminis (strain HAW-EB3).